Reading from the N-terminus, the 209-residue chain is dTTP/UTP pyrophosphatase (209 aa).

Asp-79 (proton acceptor) is an active-site residue.

The protein belongs to the Maf family. YhdE subfamily. A divalent metal cation serves as cofactor.

The protein resides in the cytoplasm. It catalyses the reaction dTTP + H2O = dTMP + diphosphate + H(+). The enzyme catalyses UTP + H2O = UMP + diphosphate + H(+). Nucleoside triphosphate pyrophosphatase that hydrolyzes dTTP and UTP. May have a dual role in cell division arrest and in preventing the incorporation of modified nucleotides into cellular nucleic acids. This chain is dTTP/UTP pyrophosphatase, found in Chelativorans sp. (strain BNC1).